We begin with the raw amino-acid sequence, 330 residues long: Probable cell division protein WhiA (330 aa).

The H-T-H motif DNA-binding region spans Ser275–Glu308.

It belongs to the WhiA family.

Its function is as follows. Involved in cell division and chromosome segregation. In Kocuria rhizophila (strain ATCC 9341 / DSM 348 / NBRC 103217 / DC2201), this protein is Probable cell division protein WhiA.